We begin with the raw amino-acid sequence, 271 residues long: Phosphatidylglycerol--prolipoprotein diacylglyceryl transferase (271 aa).

7 consecutive transmembrane segments (helical) span residues 21–41, 60–80, 95–115, 124–144, 176–196, 203–223, and 230–250; these read ISVRWYGLMYLFGFLFAMWLA, LLFAGFLGVVLGGRIGYVLFY, VWTGGMSFHGGLLGVITAMLW, FFGVADFVAPLVPFGLGVGRL, SQLYEMALEGVLLFFILNWFI, GSVSGLFLAGYGTFRFLVEYV, and LGLFGGFISMGQILSSPMIIG. Arginine 143 is a binding site for a 1,2-diacyl-sn-glycero-3-phospho-(1'-sn-glycerol).

It belongs to the Lgt family.

Its subcellular location is the cell inner membrane. It carries out the reaction L-cysteinyl-[prolipoprotein] + a 1,2-diacyl-sn-glycero-3-phospho-(1'-sn-glycerol) = an S-1,2-diacyl-sn-glyceryl-L-cysteinyl-[prolipoprotein] + sn-glycerol 1-phosphate + H(+). It functions in the pathway protein modification; lipoprotein biosynthesis (diacylglyceryl transfer). Its function is as follows. Catalyzes the transfer of the diacylglyceryl group from phosphatidylglycerol to the sulfhydryl group of the N-terminal cysteine of a prolipoprotein, the first step in the formation of mature lipoproteins. The sequence is that of Phosphatidylglycerol--prolipoprotein diacylglyceryl transferase from Vibrio vulnificus (strain YJ016).